Reading from the N-terminus, the 356-residue chain is D-xylulose reductase (356 aa).

Residues C44, H69, and E155 each coordinate Zn(2+). 179–184 (GAGPIG) serves as a coordination point for NAD(+).

Belongs to the zinc-containing alcohol dehydrogenase family. The cofactor is Zn(2+).

The catalysed reaction is xylitol + NAD(+) = D-xylulose + NADH + H(+). Its pathway is carbohydrate degradation; L-arabinose degradation via L-arabinitol; D-xylulose 5-phosphate from L-arabinose (fungal route): step 4/5. The polypeptide is D-xylulose reductase (XYL2) (Saccharomyces cerevisiae (strain ATCC 204508 / S288c) (Baker's yeast)).